Consider the following 335-residue polypeptide: NADH-quinone oxidoreductase subunit H (335 aa).

8 helical membrane-spanning segments follow: residues 11-31 (VILTVVRAIVVLLAVVVCGAL), 81-101 (MIFTLAPVVAMSALLIAFVVI), 114-134 (IGLLFFFAMAGLSVYAVLFAG), 154-174 (VSYEVFLGLALMGVVVQVGSF), 187-207 (LWFIIPQFFGFCTFFIAGVAV), 238-258 (FFVGEYIGIILISALLVTLFF), 270-290 (QVPFLWFALKTAFFIMLFILL), and 307-327 (WKFCLPLTLINLLVTAAVVLY).

The protein belongs to the complex I subunit 1 family. In terms of assembly, NDH-1 is composed of 13 different subunits. Subunits NuoA, H, J, K, L, M, N constitute the membrane sector of the complex.

The protein resides in the cell inner membrane. It carries out the reaction a quinone + NADH + 5 H(+)(in) = a quinol + NAD(+) + 4 H(+)(out). In terms of biological role, NDH-1 shuttles electrons from NADH, via FMN and iron-sulfur (Fe-S) centers, to quinones in the respiratory chain. The immediate electron acceptor for the enzyme in this species is believed to be ubiquinone. Couples the redox reaction to proton translocation (for every two electrons transferred, four hydrogen ions are translocated across the cytoplasmic membrane), and thus conserves the redox energy in a proton gradient. This subunit may bind ubiquinone. The protein is NADH-quinone oxidoreductase subunit H of Pseudomonas entomophila (strain L48).